Here is a 268-residue protein sequence, read N- to C-terminus: Esterase PIR7B (268 aa).

The active-site Acyl-ester intermediate is Ser86. Catalysis depends on charge relay system residues Asp218 and His246.

Belongs to the AB hydrolase superfamily.

Functionally, exhibits esterase activity towards naphthol AS-acetate in vitro. The sequence is that of Esterase PIR7B (PIR7B) from Oryza sativa subsp. japonica (Rice).